The following is a 411-amino-acid chain: MQCSWKAVLLLALASIAIQYTAIRTFTAKSFHTCPGLTDTGLAERLCEEGPTFSYNLSRKTHVLILATTRSGSSFVGQLFNQHMDVFYLFEPLYHVQNTLIPRFTQGKSPADRRVMLGASRDLLRSLYDCDLYFLENYIKPPPVNHTTNRVFRRGASRVLCSRPVCDPPGSSDLILEEGDCVRMCGLLNLTLAAEACRERSHVAIKTVRVPEVNDLRALVEDPRLNLKVIQLVRDPRGILASRSETFRDTYRLWRLWYGTGRKPYNLDVTQLTTVCEDFSSSVSTGLMRPSWLKGKYMLVRYEDLARNPMKKTEEIYEFLGIPLDSHVAHWIQNNTRGDPTLGKHKYSTVRNSAATAEKWRFRLSYDIVAFAQNACQQVLAQLGYKMANSEEELKNPAISLVEERDFRPFL.

The Cytoplasmic portion of the chain corresponds to 1 to 2 (MQ). A helical; Signal-anchor for type II membrane protein membrane pass occupies residues 3-23 (CSWKAVLLLALASIAIQYTAI). Topologically, residues 24–411 (RTFTAKSFHT…VEERDFRPFL (388 aa)) are lumenal. A glycan (N-linked (GlcNAc...) asparagine) is linked at Asn56. 69–75 (TRSGSSF) contributes to the 3'-phosphoadenylyl sulfate binding site. Residues Asn145 and Asn189 are each glycosylated (N-linked (GlcNAc...) asparagine). 234–242 (RDPRGILAS) serves as a coordination point for 3'-phosphoadenylyl sulfate. A glycan (N-linked (GlcNAc...) asparagine) is linked at Asn334. The Cell attachment site signature appears at 337–339 (RGD).

It belongs to the sulfotransferase 1 family. Gal/GlcNAc/GalNAc subfamily. Broadly expressed with highest levels in central nervous system. Expressed in cortex (at protein level). Expressed in high endothelial venules in peripheral lymph nodes, mesenteric lymph nodes and Peyer's patches.

The protein resides in the golgi apparatus membrane. It carries out the reaction 3'-phosphoadenylyl sulfate + keratan = adenosine 3',5'-bisphosphate + keratan 6'-sulfate.. The protein operates within glycan metabolism. Sulfotransferase that utilizes 3'-phospho-5'-adenylyl sulfate (PAPS) as sulfonate donor to catalyze the transfer of sulfate to position 6 of internal galactose (Gal) residues of keratan. Cooperates with B4GALT4 and B3GNT7 glycosyltransferases and CHST6 sulfotransferase to construct and elongate disulfated disaccharide unit [-&gt;3(6-sulfoGalbeta)1-&gt;4(6-sulfoGlcNAcbeta)1-&gt;] within keratan sulfate polymer. Has a preference for sulfating keratan sulfate, but it also transfers sulfate to the unsulfated polymer. Involved in biosynthesis of phosphacan, a major keratan sulfate proteoglycan in the developing brain. Involved in biosynthesis of 6-sulfoGalbeta-containing O-linked glycans in high endothelial venules of lymph nodes. May act in a synergistic manner with CHST4 to generate sialyl 6',6-disulfo Lewis X motif, a recognition determinant for immune cell receptors implicated in leukocyte trafficking. Catalyzes sulfation of N-acetyllactosamine (LacNAc) oligosaccharides with highest efficiency for sialylated LacNAc structures. The chain is Carbohydrate sulfotransferase 1 (Chst1) from Mus musculus (Mouse).